The chain runs to 69 residues: Conotoxin LvVID (69 aa).

The first 17 residues, 1–17 (VLIIAVLFLTACQLTTA), serve as a signal peptide directing secretion. The propeptide occupies 18–40 (ETYPRGQQRHHALRSTDKNSKLT). 3 disulfides stabilise this stretch: Cys43/Cys57, Cys50/Cys61, and Cys56/Cys68.

The protein belongs to the conotoxin O1 superfamily. Expressed by the venom duct.

Its subcellular location is the secreted. The sequence is that of Conotoxin LvVID from Conus lividus (Livid cone).